A 112-amino-acid chain; its full sequence is Small ribosomal subunit protein uS17 (112 aa).

This sequence belongs to the universal ribosomal protein uS17 family. Part of the 30S ribosomal subunit.

Functionally, one of the primary rRNA binding proteins, it binds specifically to the 5'-end of 16S ribosomal RNA. The polypeptide is Small ribosomal subunit protein uS17 (Thermotoga neapolitana (strain ATCC 49049 / DSM 4359 / NBRC 107923 / NS-E)).